A 540-amino-acid chain; its full sequence is GMP synthase [glutamine-hydrolyzing] (540 aa).

A Glutamine amidotransferase type-1 domain is found at 29-222 (KILIVDFGSQ…VRKVAGLTGD (194 aa)). The active-site Nucleophile is cysteine 106. Catalysis depends on residues histidine 196 and glutamate 198. In terms of domain architecture, GMPS ATP-PPase spans 223-415 (WTMRAFREEA…LGLPEIFVGR (193 aa)). 250–256 (SGGVDSA) lines the ATP pocket.

In terms of assembly, homodimer.

The enzyme catalyses XMP + L-glutamine + ATP + H2O = GMP + L-glutamate + AMP + diphosphate + 2 H(+). It participates in purine metabolism; GMP biosynthesis; GMP from XMP (L-Gln route): step 1/1. In terms of biological role, catalyzes the synthesis of GMP from XMP. The polypeptide is GMP synthase [glutamine-hydrolyzing] (Rhodopseudomonas palustris (strain HaA2)).